Here is a 702-residue protein sequence, read N- to C-terminus: Elongation factor G (702 aa).

The tr-type G domain occupies 8-290; that stretch reads ERYRNIGISA…GVVEYLPSPV (283 aa). Residues 17–24, 88–92, and 142–145 each bind GTP; these read AHIDAGKT, DTPGH, and NKMD.

Belongs to the TRAFAC class translation factor GTPase superfamily. Classic translation factor GTPase family. EF-G/EF-2 subfamily.

The protein resides in the cytoplasm. Functionally, catalyzes the GTP-dependent ribosomal translocation step during translation elongation. During this step, the ribosome changes from the pre-translocational (PRE) to the post-translocational (POST) state as the newly formed A-site-bound peptidyl-tRNA and P-site-bound deacylated tRNA move to the P and E sites, respectively. Catalyzes the coordinated movement of the two tRNA molecules, the mRNA and conformational changes in the ribosome. The polypeptide is Elongation factor G (Janthinobacterium sp. (strain Marseille) (Minibacterium massiliensis)).